The sequence spans 629 residues: tRNA uridine 5-carboxymethylaminomethyl modification enzyme MnmG (629 aa).

13–18 provides a ligand contact to FAD; it reads GGGHAG. 273 to 287 contributes to the NAD(+) binding site; sequence GPRYCPSIEDKVNRF.

Belongs to the MnmG family. In terms of assembly, homodimer. Heterotetramer of two MnmE and two MnmG subunits. Requires FAD as cofactor.

It is found in the cytoplasm. Its function is as follows. NAD-binding protein involved in the addition of a carboxymethylaminomethyl (cmnm) group at the wobble position (U34) of certain tRNAs, forming tRNA-cmnm(5)s(2)U34. This is tRNA uridine 5-carboxymethylaminomethyl modification enzyme MnmG from Hahella chejuensis (strain KCTC 2396).